A 398-amino-acid chain; its full sequence is Inositol polyphosphate 5-phosphatase (398 aa).

This sequence belongs to the inositol 1,4,5-trisphosphate 5-phosphatase type II family. As to expression, expressed in tail, cilia, dendrites, axon and male head.

It is found in the cytoplasm. In terms of biological role, dephosphorylates a number of phosphatidylinositols. Controls the cellular levels and subcellular distribution of phosphatidylinositol 3,5-bisphosphate and phosphatidylinositol 3,4,5-trisphosphate. Has a role in sperm activation and motility. Influences the localization of the transient receptor potential polycystin (TRPP) complex proteins lov-1 and pkd-2. The chain is Inositol polyphosphate 5-phosphatase from Caenorhabditis elegans.